Reading from the N-terminus, the 613-residue chain is Chitin synthase 8 (613 aa).

The segment at 1–73 (MAVSPTAKRK…PAPLTRPPPP (73 aa)) is disordered. Asn-17 carries an N-linked (GlcNAc...) asparagine glycan. Residues 18–27 (LSRQSSSART) are compositionally biased toward polar residues. Positions 61–73 (ESPPAPLTRPPPP) are enriched in pro residues. Helical transmembrane passes span 119-139 (YSLI…LWNY) and 142-162 (YWYI…IFAI). 3 N-linked (GlcNAc...) asparagine glycosylation sites follow: Asn-312, Asn-421, and Asn-471. The next 2 membrane-spanning stretches (helical) occupy residues 556–576 (VTTW…AIAL) and 583–602 (IFEN…RYAA).

The protein belongs to the chitin synthase family.

Its subcellular location is the cell membrane. It carries out the reaction [(1-&gt;4)-N-acetyl-beta-D-glucosaminyl](n) + UDP-N-acetyl-alpha-D-glucosamine = [(1-&gt;4)-N-acetyl-beta-D-glucosaminyl](n+1) + UDP + H(+). Functionally, polymerizes chitin, a structural polymer of the cell wall and septum, by transferring the sugar moiety of UDP-GlcNAc to the non-reducing end of the growing chitin polymer. Plays a role in cell wall integrity. Plays a key role in pathogenicity. Likely contributes to post-penetration virulence. This Verticillium dahliae (strain VdLs.17 / ATCC MYA-4575 / FGSC 10137) (Verticillium wilt) protein is Chitin synthase 8.